Here is a 127-residue protein sequence, read N- to C-terminus: Small ribosomal subunit protein bS6 (127 aa).

A disordered region spans residues 99–127 (PSPMMKEEKSKSMMPGDAAPAAPAETAAA). A compositionally biased stretch (low complexity) spans 110-127 (SMMPGDAAPAAPAETAAA).

Belongs to the bacterial ribosomal protein bS6 family.

Functionally, binds together with bS18 to 16S ribosomal RNA. The sequence is that of Small ribosomal subunit protein bS6 from Dechloromonas aromatica (strain RCB).